The chain runs to 84 residues: MARENKKELIGKVVSDKMSKTVVVEIVQRKMHPIYHKYLKVSRRVKAHDEREESKLGDKVKIVESRPISKEKRWRLVEILERSK.

This sequence belongs to the universal ribosomal protein uS17 family. Part of the 30S ribosomal subunit.

One of the primary rRNA binding proteins, it binds specifically to the 5'-end of 16S ribosomal RNA. The sequence is that of Small ribosomal subunit protein uS17 from Borrelia recurrentis (strain A1).